Consider the following 381-residue polypeptide: 8-amino-7-oxononanoate synthase (381 aa).

Arginine 27 provides a ligand contact to substrate. Residue 105 to 106 participates in pyridoxal 5'-phosphate binding; the sequence is GY. Substrate is bound at residue histidine 130. Residues serine 176, 201–204, and 232–235 contribute to the pyridoxal 5'-phosphate site; these read DEAH and TLSK. Position 235 is an N6-(pyridoxal phosphate)lysine (lysine 235). Threonine 345 contacts substrate.

It belongs to the class-II pyridoxal-phosphate-dependent aminotransferase family. BioF subfamily. As to quaternary structure, homodimer. Pyridoxal 5'-phosphate is required as a cofactor.

The enzyme catalyses 6-carboxyhexanoyl-[ACP] + L-alanine + H(+) = (8S)-8-amino-7-oxononanoate + holo-[ACP] + CO2. The protein operates within cofactor biosynthesis; biotin biosynthesis. Functionally, catalyzes the decarboxylative condensation of pimeloyl-[acyl-carrier protein] and L-alanine to produce 8-amino-7-oxononanoate (AON), [acyl-carrier protein], and carbon dioxide. The polypeptide is 8-amino-7-oxononanoate synthase (Mycobacterium avium (strain 104)).